The sequence spans 1555 residues: Glycogen debranching enzyme (1555 aa).

Phosphoserine is present on S87. Catalysis depends on residues D549, H552, and D650.

Belongs to the glycogen debranching enzyme family. As to quaternary structure, monomer. Interacts with NHLRC1/malin. The N-terminus is blocked. Post-translationally, ubiquitinated.

The protein localises to the cytoplasm. The enzyme catalyses Transfers a segment of a (1-&gt;4)-alpha-D-glucan to a new position in an acceptor, which may be glucose or a (1-&gt;4)-alpha-D-glucan.. The catalysed reaction is Hydrolysis of (1-&gt;6)-alpha-D-glucosidic branch linkages in glycogen phosphorylase limit dextrin.. Multifunctional enzyme acting as 1,4-alpha-D-glucan:1,4-alpha-D-glucan 4-alpha-D-glycosyltransferase and amylo-1,6-glucosidase in glycogen degradation. The polypeptide is Glycogen debranching enzyme (AGL) (Oryctolagus cuniculus (Rabbit)).